The following is a 250-amino-acid chain: Non-specific acid phosphatase (250 aa).

Residues 1–20 (MKSRYLLFFLPLIVAKYTSA) form the signal peptide.

The protein belongs to the class A bacterial acid phosphatase family. As to quaternary structure, homodimer.

The protein localises to the periplasm. It carries out the reaction a phosphate monoester + H2O = an alcohol + phosphate. The protein is Non-specific acid phosphatase (phoN) of Salmonella typhi.